The following is a 431-amino-acid chain: Tol-Pal system protein TolB (431 aa).

Residues 1-26 (MSLMTKLGFRALVASCLITAGSAANA) form the signal peptide. The segment at 406-431 (DGSAPPQILSVQGGSVREPSWGPFMQ) is disordered.

It belongs to the TolB family. As to quaternary structure, the Tol-Pal system is composed of five core proteins: the inner membrane proteins TolA, TolQ and TolR, the periplasmic protein TolB and the outer membrane protein Pal. They form a network linking the inner and outer membranes and the peptidoglycan layer.

The protein resides in the periplasm. Its function is as follows. Part of the Tol-Pal system, which plays a role in outer membrane invagination during cell division and is important for maintaining outer membrane integrity. In Burkholderia cenocepacia (strain ATCC BAA-245 / DSM 16553 / LMG 16656 / NCTC 13227 / J2315 / CF5610) (Burkholderia cepacia (strain J2315)), this protein is Tol-Pal system protein TolB.